A 307-amino-acid polypeptide reads, in one-letter code: Ornithine carbamoyltransferase (307 aa).

Carbamoyl phosphate-binding positions include 55–58 (STRT), glutamine 82, arginine 106, and 133–136 (HPCQ). Residues asparagine 164, aspartate 224, and 228-229 (SM) contribute to the L-ornithine site. Residues 263-264 (CL) and arginine 291 each bind carbamoyl phosphate.

The protein belongs to the aspartate/ornithine carbamoyltransferase superfamily. OTCase family.

It localises to the cytoplasm. It catalyses the reaction carbamoyl phosphate + L-ornithine = L-citrulline + phosphate + H(+). The protein operates within amino-acid biosynthesis; L-arginine biosynthesis; L-arginine from L-ornithine and carbamoyl phosphate: step 1/3. Reversibly catalyzes the transfer of the carbamoyl group from carbamoyl phosphate (CP) to the N(epsilon) atom of ornithine (ORN) to produce L-citrulline. The polypeptide is Ornithine carbamoyltransferase (Bradyrhizobium diazoefficiens (strain JCM 10833 / BCRC 13528 / IAM 13628 / NBRC 14792 / USDA 110)).